A 118-amino-acid chain; its full sequence is Dihydroneopterin aldolase (118 aa).

Substrate-binding positions include E21, Y53, and 72 to 73 (IE). K98 serves as the catalytic Proton donor/acceptor.

It belongs to the DHNA family.

It catalyses the reaction 7,8-dihydroneopterin = 6-hydroxymethyl-7,8-dihydropterin + glycolaldehyde. The catalysed reaction is 7,8-dihydroneopterin = 7,8-dihydromonapterin. Its pathway is cofactor biosynthesis; tetrahydrofolate biosynthesis; 2-amino-4-hydroxy-6-hydroxymethyl-7,8-dihydropteridine diphosphate from 7,8-dihydroneopterin triphosphate: step 3/4. Catalyzes the conversion of 7,8-dihydroneopterin to 6-hydroxymethyl-7,8-dihydropterin. Can use L-threo-dihydroneopterin and D-erythro-dihydroneopterin as substrates for the formation of 6-hydroxymethyldihydropterin, but it can also catalyze the epimerization of carbon 2' of dihydroneopterin to dihydromonapterin. This chain is Dihydroneopterin aldolase (folB), found in Haemophilus influenzae (strain ATCC 51907 / DSM 11121 / KW20 / Rd).